Here is a 576-residue protein sequence, read N- to C-terminus: uncharacterized protein (576 aa).

Polar residues-rich tracts occupy residues 1–21 (MSTN…QSAS) and 28–40 (HTTS…TYQL). The tract at residues 1–40 (MSTNPNAGIQPLTNSISQSASAHPELYHTTSHESVSTYQL) is disordered. The next 12 helical transmembrane spans lie at 149–169 (FASS…HISL), 173–193 (LLTM…WAPL), 200–220 (KLPL…VAVA), 231–251 (FFSG…FADM), 261–281 (ITIF…IGGF), 291–311 (WTEY…YLFC), 366–386 (PIVF…YLLL), 401–421 (MGVA…GSAI), 446–466 (LPPM…LSWS), 472–492 (VHWI…LLIF), 503–525 (YLFR…AAGF), and 542–562 (GSLL…FFFF).

This sequence belongs to the major facilitator superfamily. CAR1 family.

It localises to the endoplasmic reticulum. It is found in the golgi apparatus. The protein localises to the membrane. This is an uncharacterized protein from Schizosaccharomyces pombe (strain 972 / ATCC 24843) (Fission yeast).